The primary structure comprises 277 residues: ATP synthase subunit delta (277 aa).

The protein belongs to the ATPase delta chain family. As to quaternary structure, F-type ATPases have 2 components, F(1) - the catalytic core - and F(0) - the membrane proton channel. F(1) has five subunits: alpha(3), beta(3), gamma(1), delta(1), epsilon(1). F(0) has three main subunits: a(1), b(2) and c(10-14). The alpha and beta chains form an alternating ring which encloses part of the gamma chain. F(1) is attached to F(0) by a central stalk formed by the gamma and epsilon chains, while a peripheral stalk is formed by the delta and b chains.

The protein resides in the cell membrane. F(1)F(0) ATP synthase produces ATP from ADP in the presence of a proton or sodium gradient. F-type ATPases consist of two structural domains, F(1) containing the extramembraneous catalytic core and F(0) containing the membrane proton channel, linked together by a central stalk and a peripheral stalk. During catalysis, ATP synthesis in the catalytic domain of F(1) is coupled via a rotary mechanism of the central stalk subunits to proton translocation. In terms of biological role, this protein is part of the stalk that links CF(0) to CF(1). It either transmits conformational changes from CF(0) to CF(1) or is implicated in proton conduction. The polypeptide is ATP synthase subunit delta (Frankia alni (strain DSM 45986 / CECT 9034 / ACN14a)).